A 149-amino-acid chain; its full sequence is Large ribosomal subunit protein bL9 (149 aa).

The protein belongs to the bacterial ribosomal protein bL9 family.

Binds to the 23S rRNA. This Geobacillus thermodenitrificans (strain NG80-2) protein is Large ribosomal subunit protein bL9.